A 310-amino-acid polypeptide reads, in one-letter code: Putative S-adenosyl-L-methionine-dependent methyltransferase Franean1_4929 (310 aa).

Residues 1–28 (MSRPSAPRGRTELRSIHERGHERGSAGV) are disordered. The segment covering 9–24 (GRTELRSIHERGHERG) has biased composition (basic and acidic residues). S-adenosyl-L-methionine is bound by residues Asp136 and 165–166 (DL).

The protein belongs to the UPF0677 family.

In terms of biological role, exhibits S-adenosyl-L-methionine-dependent methyltransferase activity. The chain is Putative S-adenosyl-L-methionine-dependent methyltransferase Franean1_4929 from Parafrankia sp. (strain EAN1pec).